The sequence spans 310 residues: Methionyl-tRNA formyltransferase (310 aa).

109–112 (SLLP) contributes to the (6S)-5,6,7,8-tetrahydrofolate binding site.

Belongs to the Fmt family.

The enzyme catalyses L-methionyl-tRNA(fMet) + (6R)-10-formyltetrahydrofolate = N-formyl-L-methionyl-tRNA(fMet) + (6S)-5,6,7,8-tetrahydrofolate + H(+). Its function is as follows. Attaches a formyl group to the free amino group of methionyl-tRNA(fMet). The formyl group appears to play a dual role in the initiator identity of N-formylmethionyl-tRNA by promoting its recognition by IF2 and preventing the misappropriation of this tRNA by the elongation apparatus. This Pseudomonas putida (strain ATCC 700007 / DSM 6899 / JCM 31910 / BCRC 17059 / LMG 24140 / F1) protein is Methionyl-tRNA formyltransferase.